A 168-amino-acid polypeptide reads, in one-letter code: GTP-dependent dephospho-CoA kinase (168 aa).

GTP is bound by residues D49, I50, V51, D68, K70, and E120.

The protein belongs to the GTP-dependent DPCK family.

It catalyses the reaction 3'-dephospho-CoA + GTP = GDP + CoA + H(+). Its pathway is cofactor biosynthesis; coenzyme A biosynthesis. In terms of biological role, catalyzes the GTP-dependent phosphorylation of the 3'-hydroxyl group of dephosphocoenzyme A to form coenzyme A (CoA). This is GTP-dependent dephospho-CoA kinase from Pyrobaculum islandicum (strain DSM 4184 / JCM 9189 / GEO3).